The following is a 214-amino-acid chain: Phosphatidylserine decarboxylase proenzyme (214 aa).

The active-site Schiff-base intermediate with substrate; via pyruvic acid is Ser-183. At Ser-183 the chain carries Pyruvic acid (Ser); by autocatalysis.

Belongs to the phosphatidylserine decarboxylase family. PSD-A subfamily. Heterodimer of a large membrane-associated beta subunit and a small pyruvoyl-containing alpha subunit. The cofactor is pyruvate. Post-translationally, is synthesized initially as an inactive proenzyme. Formation of the active enzyme involves a self-maturation process in which the active site pyruvoyl group is generated from an internal serine residue via an autocatalytic post-translational modification. Two non-identical subunits are generated from the proenzyme in this reaction, and the pyruvate is formed at the N-terminus of the alpha chain, which is derived from the carboxyl end of the proenzyme. The post-translation cleavage follows an unusual pathway, termed non-hydrolytic serinolysis, in which the side chain hydroxyl group of the serine supplies its oxygen atom to form the C-terminus of the beta chain, while the remainder of the serine residue undergoes an oxidative deamination to produce ammonia and the pyruvoyl prosthetic group on the alpha chain.

It localises to the cell membrane. The catalysed reaction is a 1,2-diacyl-sn-glycero-3-phospho-L-serine + H(+) = a 1,2-diacyl-sn-glycero-3-phosphoethanolamine + CO2. It participates in phospholipid metabolism; phosphatidylethanolamine biosynthesis; phosphatidylethanolamine from CDP-diacylglycerol: step 2/2. Functionally, catalyzes the formation of phosphatidylethanolamine (PtdEtn) from phosphatidylserine (PtdSer). The protein is Phosphatidylserine decarboxylase proenzyme of Syntrophotalea carbinolica (strain DSM 2380 / NBRC 103641 / GraBd1) (Pelobacter carbinolicus).